The following is a 1028-amino-acid chain: Formin-like protein 3 (1028 aa).

A lipid anchor (N-myristoyl glycine) is attached at G2. In terms of domain architecture, GBD/FH3 spans 26-472 (MPMPEPCELE…EAFQRRCHLE (447 aa)). T95 bears the Phosphothreonine mark. S174 bears the Phosphoserine mark. The segment at 493 to 541 (ELSEGMPPSDLDLLAPAPPPEEVLPLPPPPAPPLPPPPPPLPDKCPPAP) is disordered. Pro residues predominate over residues 508 to 541 (PAPPPEEVLPLPPPPAPPLPPPPPPLPDKCPPAP). Positions 561–951 (IKKPIKTKFR…MREKQLAQEA (391 aa)) constitute an FH2 domain. Positions 986–1018 (YEGKDGTIEDIITVLKSVPFTARTAKRGSRFFC) constitute a DAD domain. Phosphoserine is present on S1014.

Belongs to the formin homology family. Interacts with SRGAP2 (via SH3 domain). In terms of tissue distribution, expressed in endothelial cells.

It localises to the cytoplasm. It is found in the cell membrane. Plays a role in the regulation of cell morphology and cytoskeletal organization. Required in the control of cell shape and migration. Required for developmental angiogenesis. In this process, required for microtubule reorganization and for efficient endothelial cell elongation. In quiescent endothelial cells, triggers rearrangement of the actin cytoskeleton, but does not alter microtubule alignement. The sequence is that of Formin-like protein 3 (FMNL3) from Homo sapiens (Human).